Reading from the N-terminus, the 904-residue chain is Phosphoenolpyruvate carboxylase (904 aa).

Catalysis depends on residues His-151 and Lys-570.

This sequence belongs to the PEPCase type 1 family. Mg(2+) is required as a cofactor.

It catalyses the reaction oxaloacetate + phosphate = phosphoenolpyruvate + hydrogencarbonate. Functionally, forms oxaloacetate, a four-carbon dicarboxylic acid source for the tricarboxylic acid cycle. The protein is Phosphoenolpyruvate carboxylase of Xanthomonas campestris pv. campestris (strain ATCC 33913 / DSM 3586 / NCPPB 528 / LMG 568 / P 25).